Consider the following 154-residue polypeptide: Protein SprT-like (154 aa).

Residues 6 to 144 (LQQLTETISL…CGTCHGKLKF (139 aa)) enclose the SprT-like domain. Histidine 67 serves as a coordination point for Zn(2+). Glutamate 68 is an active-site residue. Histidine 71 is a Zn(2+) binding site.

The protein belongs to the SprT family. The cofactor is Zn(2+).

Its subcellular location is the cytoplasm. The sequence is that of Protein SprT-like from Shouchella clausii (strain KSM-K16) (Alkalihalobacillus clausii).